We begin with the raw amino-acid sequence, 360 residues long: Methyltransferase pvhD (360 aa).

Residues 201–202 (SG), Asp227, 251–252 (DL), Arg267, and Arg268 each bind S-adenosyl-L-methionine.

This sequence belongs to the class I-like SAM-binding methyltransferase superfamily. Cation-independent O-methyltransferase family.

It participates in secondary metabolite biosynthesis. In terms of biological role, methyltransferase; part of the gene cluster that mediates the biosynthesis of varicidin A, an antifungal natural product containing a cis-octahydrodecalin core. The PKS module of pvhA together with the enoylreductase pvhC catalyze the formation of the polyketide unit which is then conjugated to L-isoleucine by the condensation domain of the NRPS module. Activity of the Dieckmann cyclase domain (RED) of pvhA results in release of an acyclic tetramate. The cytochrome P450 monooxygenase pvhE then catalyzes the oxidation of the C21 methyl group to a to carboxylate group. The methyltransferase pvhD then further methylates the pvhE product. The Diels-Alderase pvhB is able to catalyze Diels-Alder cycloaddition using both pvhE and pvhD products as substrates to form the decalin ring, yielding varicidin B and A, respectively. The sequence is that of Methyltransferase pvhD from Talaromyces variabilis (Penicillium variabile).